A 529-amino-acid chain; its full sequence is Bifunctional purine biosynthesis protein PurH (529 aa).

The MGS-like domain occupies 1 to 148 (MQQRRPVRRA…KNHKDVAIVV (148 aa)).

The protein belongs to the PurH family.

It carries out the reaction (6R)-10-formyltetrahydrofolate + 5-amino-1-(5-phospho-beta-D-ribosyl)imidazole-4-carboxamide = 5-formamido-1-(5-phospho-D-ribosyl)imidazole-4-carboxamide + (6S)-5,6,7,8-tetrahydrofolate. The enzyme catalyses IMP + H2O = 5-formamido-1-(5-phospho-D-ribosyl)imidazole-4-carboxamide. Its pathway is purine metabolism; IMP biosynthesis via de novo pathway; 5-formamido-1-(5-phospho-D-ribosyl)imidazole-4-carboxamide from 5-amino-1-(5-phospho-D-ribosyl)imidazole-4-carboxamide (10-formyl THF route): step 1/1. It participates in purine metabolism; IMP biosynthesis via de novo pathway; IMP from 5-formamido-1-(5-phospho-D-ribosyl)imidazole-4-carboxamide: step 1/1. In Salmonella typhi, this protein is Bifunctional purine biosynthesis protein PurH.